The sequence spans 164 residues: Lipoprotein signal peptidase (164 aa).

4 helical membrane passes run 8 to 28 (IVAA…LLFV), 39 to 59 (VTPF…GWFQ), 64 to 84 (VGAT…AIWM), and 91 to 111 (LATI…IDRF). Catalysis depends on residues D118 and D140. The helical transmembrane segment at 131-151 (YSWYVFNLADVAIVAGVIALL) threads the bilayer.

Belongs to the peptidase A8 family.

The protein localises to the cell inner membrane. It catalyses the reaction Release of signal peptides from bacterial membrane prolipoproteins. Hydrolyzes -Xaa-Yaa-Zaa-|-(S,diacylglyceryl)Cys-, in which Xaa is hydrophobic (preferably Leu), and Yaa (Ala or Ser) and Zaa (Gly or Ala) have small, neutral side chains.. It functions in the pathway protein modification; lipoprotein biosynthesis (signal peptide cleavage). Functionally, this protein specifically catalyzes the removal of signal peptides from prolipoproteins. In Nitrobacter hamburgensis (strain DSM 10229 / NCIMB 13809 / X14), this protein is Lipoprotein signal peptidase.